Consider the following 609-residue polypeptide: Vanadium chloroperoxidase (609 aa).

Vanadate contacts are provided by lysine 353, arginine 360, serine 402, glycine 403, histidine 404, arginine 490, and histidine 496. The Proton donor role is filled by histidine 404. The disordered stretch occupies residues lysine 569 to proline 609.

This sequence belongs to the vanadium-dependent haloperoxidase family. As to quaternary structure, homotetramer. It depends on vanadate as a cofactor. The N-terminus is blocked.

It localises to the secreted. The catalysed reaction is RH + Cl(-) + H2O2 = RCl + 2 H2O.. Catalyzes the oxidation of chloride in the presence of hydrogen peroxide to hypochlorous acid (ClOH), which in turn can react with a nucleophilic acceptor (RH), to form a chlorinated compound. The protein is Vanadium chloroperoxidase (CPO) of Curvularia inaequalis (Helminthosporium inaequale).